The following is a 290-amino-acid chain: L-fucono-1,5-lactonase (290 aa).

Belongs to the metallo-dependent hydrolases superfamily.

It carries out the reaction L-fucono-1,5-lactone + H2O = L-fuconate + H(+). The enzyme catalyses L-fucono-1,4-lactone + H2O = L-fuconate + H(+). It catalyses the reaction D-arabinono-1,4-lactone + H2O = D-arabinonate + H(+). The catalysed reaction is L-xylono-1,4-lactone + H2O = L-xylonate + H(+). It carries out the reaction L-galactono-1,4-lactone + H2O = L-galactonate + H(+). Its function is as follows. Catalyzes the hydrolysis of L-fucono-1,5-lactone to L-fuconate. Can also hydrolyze L-fucono-1,4-lactone, L-galactono-1,4-lactone D-arabinono-1,4-lactone and L-xylono-1,4-lactone. This is L-fucono-1,5-lactonase from Burkholderia ambifaria (strain ATCC BAA-244 / DSM 16087 / CCUG 44356 / LMG 19182 / AMMD) (Burkholderia cepacia (strain AMMD)).